The chain runs to 142 residues: AP-2 complex subunit sigma (142 aa).

The protein belongs to the adaptor complexes small subunit family. As to quaternary structure, adaptor protein complex 2 (AP-2) is a heterotetramer composed of two large adaptins (alpha-type and beta-type subunits), a medium adaptin (mu-type subunit) and a small adaptin (sigma-type subunit).

The protein resides in the cell membrane. It is found in the membrane. The protein localises to the coated pit. Functionally, subunit of the adaptor protein complex 2 (AP-2). Adaptor protein complexes function in protein transport via transport vesicles in different membrane traffic pathways. Adaptor protein complexes are vesicle coat components and appear to be involved in cargo selection and vesicle formation. AP-2 is involved in clathrin-dependent endocytosis in which cargo proteins are incorporated into vesicles surrounded by clathrin (clathrin-coated vesicles, CCVs) which are destined for fusion with the early endosome. The complex binds polyphosphoinositides. The polypeptide is AP-2 complex subunit sigma (AP17) (Arabidopsis thaliana (Mouse-ear cress)).